Here is a 136-residue protein sequence, read N- to C-terminus: Large ribosomal subunit protein uL16 (136 aa).

The protein belongs to the universal ribosomal protein uL16 family. As to quaternary structure, part of the 50S ribosomal subunit.

Its function is as follows. Binds 23S rRNA and is also seen to make contacts with the A and possibly P site tRNAs. The chain is Large ribosomal subunit protein uL16 from Buchnera aphidicola subsp. Acyrthosiphon pisum (strain 5A).